The primary structure comprises 151 residues: 3-hydroxyacyl-[acyl-carrier-protein] dehydratase FabZ (151 aa).

Histidine 56 is an active-site residue.

The protein belongs to the thioester dehydratase family. FabZ subfamily.

It localises to the cytoplasm. It catalyses the reaction a (3R)-hydroxyacyl-[ACP] = a (2E)-enoyl-[ACP] + H2O. Involved in unsaturated fatty acids biosynthesis. Catalyzes the dehydration of short chain beta-hydroxyacyl-ACPs and long chain saturated and unsaturated beta-hydroxyacyl-ACPs. The chain is 3-hydroxyacyl-[acyl-carrier-protein] dehydratase FabZ from Rhodopseudomonas palustris (strain ATCC BAA-98 / CGA009).